The sequence spans 142 residues: Mediator of RNA polymerase II transcription subunit 9 (142 aa).

The disordered stretch occupies residues 1–58 (MASSGVAGGRQAEDTLQPPPELLPESKPPPPPQPLPVAALPPPAAPRPQSPAGAKEEN). Ala-2 bears the N-acetylalanine mark. Over residues 17–49 (QPPPELLPESKPPPPPQPLPVAALPPPAAPRPQ) the composition is skewed to pro residues. Positions 78-134 (DLHQDLNALKTKFQELRKLIGTMPGIHVSPEQQQQQLHSLREQVRTKNELLQKYKSL) form a coiled coil. Residue Ser-106 is modified to Phosphoserine.

Belongs to the Mediator complex subunit 9 family. As to quaternary structure, component of the Mediator complex, which is composed of MED1, MED4, MED6, MED7, MED8, MED9, MED10, MED11, MED12, MED13, MED13L, MED14, MED15, MED16, MED17, MED18, MED19, MED20, MED21, MED22, MED23, MED24, MED25, MED26, MED27, MED29, MED30, MED31, CCNC, CDK8 and CDC2L6/CDK11. The MED12, MED13, CCNC and CDK8 subunits form a distinct module termed the CDK8 module. Mediator containing the CDK8 module is less active than Mediator lacking this module in supporting transcriptional activation. Individual preparations of the Mediator complex lacking one or more distinct subunits have been variously termed ARC, CRSP, DRIP, PC2, SMCC and TRAP.

It is found in the nucleus. Component of the Mediator complex, a coactivator involved in the regulated transcription of nearly all RNA polymerase II-dependent genes. Mediator functions as a bridge to convey information from gene-specific regulatory proteins to the basal RNA polymerase II transcription machinery. Mediator is recruited to promoters by direct interactions with regulatory proteins and serves as a scaffold for the assembly of a functional preinitiation complex with RNA polymerase II and the general transcription factors. This Mus musculus (Mouse) protein is Mediator of RNA polymerase II transcription subunit 9 (Med9).